The sequence spans 260 residues: Thiazole synthase (260 aa).

Lysine 102 functions as the Schiff-base intermediate with DXP in the catalytic mechanism. Residues glycine 163, 189–190, and 211–212 contribute to the 1-deoxy-D-xylulose 5-phosphate site; these read AG and NT.

Belongs to the ThiG family. Homotetramer. Forms heterodimers with either ThiH or ThiS.

Its subcellular location is the cytoplasm. The catalysed reaction is [ThiS sulfur-carrier protein]-C-terminal-Gly-aminoethanethioate + 2-iminoacetate + 1-deoxy-D-xylulose 5-phosphate = [ThiS sulfur-carrier protein]-C-terminal Gly-Gly + 2-[(2R,5Z)-2-carboxy-4-methylthiazol-5(2H)-ylidene]ethyl phosphate + 2 H2O + H(+). It participates in cofactor biosynthesis; thiamine diphosphate biosynthesis. Catalyzes the rearrangement of 1-deoxy-D-xylulose 5-phosphate (DXP) to produce the thiazole phosphate moiety of thiamine. Sulfur is provided by the thiocarboxylate moiety of the carrier protein ThiS. In vitro, sulfur can be provided by H(2)S. This chain is Thiazole synthase, found in Citrifermentans bemidjiense (strain ATCC BAA-1014 / DSM 16622 / JCM 12645 / Bem) (Geobacter bemidjiensis).